Consider the following 475-residue polypeptide: ATP synthase subunit beta 1 (475 aa).

153-160 (GGAGVGKT) lines the ATP pocket.

It belongs to the ATPase alpha/beta chains family. As to quaternary structure, F-type ATPases have 2 components, CF(1) - the catalytic core - and CF(0) - the membrane proton channel. CF(1) has five subunits: alpha(3), beta(3), gamma(1), delta(1), epsilon(1). CF(0) has three main subunits: a(1), b(2) and c(9-12). The alpha and beta chains form an alternating ring which encloses part of the gamma chain. CF(1) is attached to CF(0) by a central stalk formed by the gamma and epsilon chains, while a peripheral stalk is formed by the delta and b chains.

It is found in the cell membrane. The enzyme catalyses ATP + H2O + 4 H(+)(in) = ADP + phosphate + 5 H(+)(out). In terms of biological role, produces ATP from ADP in the presence of a proton gradient across the membrane. The catalytic sites are hosted primarily by the beta subunits. The chain is ATP synthase subunit beta 1 from Mycoplasmopsis pulmonis (strain UAB CTIP) (Mycoplasma pulmonis).